Here is a 341-residue protein sequence, read N- to C-terminus: Basic membrane protein B (341 aa).

The signal sequence occupies residues 1-14 (MRIAIFIFGILLTS). Residue Cys15 is the site of N-palmitoyl cysteine attachment. Residue Cys15 is the site of S-diacylglycerol cysteine attachment.

This sequence belongs to the BMP lipoprotein family. Monomer.

It localises to the cell inner membrane. May be part of an ABC-type nucleoside uptake system involved in the purine salvage pathway. This Borreliella afzelii (strain PKo) (Borrelia afzelii) protein is Basic membrane protein B (bmpB).